The primary structure comprises 39 residues: Omega-actinopoditoxin-Mb1a (39 aa).

3 disulfide bridges follow: cysteine 4/cysteine 19, cysteine 11/cysteine 30, and cysteine 18/cysteine 38.

In terms of processing, contains 3 disulfide bonds. Expressed by the venom gland.

It localises to the secreted. In terms of biological role, potent inhibitor of insect, but not mammalian, voltage-gated calcium channels (Cav). The protein is Omega-actinopoditoxin-Mb1a of Missulena bradleyi (Eastern mouse spider).